We begin with the raw amino-acid sequence, 269 residues long: Protein TIFY 11B (269 aa).

The Tify domain maps to 100-135; it reads PESGNSQLTIFFGGKVMVFNEFPEDKAKEIMEVAKE. The interval 160–181 is disordered; that stretch reads PDLNEPTSSGNNEDQETGQQHQ. Positions 164-181 are enriched in polar residues; sequence EPTSSGNNEDQETGQQHQ. The Jas motif lies at 186–210; sequence IARRASLHRFFAKRKDRAVARAPYQ. The short motif at 187–194 is the Nuclear localization signal element; the sequence is ARRASLHR. The interval 209-269 is disordered; the sequence is YQVNQHGSHL…QSSKNLELKL (61 aa). The segment covering 250–269 has biased composition (basic and acidic residues); that stretch reads MPMEVDKKEGQSSKNLELKL.

This sequence belongs to the TIFY/JAZ family. Homo- and heterodimer. Interacts with MYC2, AFPH2/NINJA, TIFY10A/JAZ1, TIFY10B/JAZ2, TIFY11A/JAZ5, TIFY5A/JAZ8, TIFY9/JAZ10 and TIFY3B/JAZ12. In terms of assembly, (Microbial infection) Interacts with the pathogenic Pseudomonas syringae HopZ1a protein. (Microbial infection) Acetylated by Pseudomonas syringae HopZ1a. In terms of processing, ubiquitinated. Targeted for degradation by the SCF(COI1) E3 ubiquitin ligase-proteasome pathway during jasmonate signaling.

It is found in the nucleus. Its subcellular location is the cell membrane. Repressor of jasmonate responses. The protein is Protein TIFY 11B of Arabidopsis thaliana (Mouse-ear cress).